A 1392-amino-acid chain; its full sequence is MEVLMAERANLVFHNKAINGTAMKRLISRLIDHFGMAYTSHILDQVKTLGFQQATATSISLGIDDLLTIPSKGWLVQDAEQQSLILEKHHHYGNVHAVEKLRQSIEIWYATSEYLRQEMNPNFRMTDPFNPVHIMSFSGARGNASQVHQLVGMRGLMSDPQGQMIDLPIQSNLREGLSLTEYIISCYGARKGVVDTAVRTSDAGYLTRRLVEVVQHIVVRRTDCGTARGISVSPRNGMMPERIFIQTLIGRVLADDIYMGPRCIATRNQDIGIGLVNRFITFRAQPISIRTPFTCRSTSWICRLCYGRSPTHGDLVELGEAVGIIAGQSIGEPGTQLTLRTFHTGGVFTGGTAEHVRAPSNGKIKFNEDLVHPTRTRHGHPAFLCSIDLYVTIESEDILHNVNIPPKSLLLVQNDQYVESEQVIAEIRAGISTLNFKEKVRKHIYSDSDGEMHWSTDVYHAPEFTYGNVHLLPKTSHLWILLGRPCRSSLVYLSIHKDQDQMNAHFLSGKRRYTSNLSVTNDQARQKLFSSDFSGKKEDRIPDYSDLNRIICAGQYNLVYSPILHENSDLLSKRRRNKFIIPLHSIQELENELMPCSGISIEIPVNGIFRRNSILAYFDDPRYRRKSSGIIKYGTVETHSVIKKEDLLEYRGVKEFRPKYQMKVDRFFFIPEEVHILPGSSSIMVRNNSIVGVDTQITLNLRSRVGGLVRVERKKKRIELKIFSGDIHFPGETDKISRHTGVLIPPGTGKRNSKESKKVKNWIYVQRITPSKKKFFVLVRPVVTYEITDGINLATLFPPDPLQERDNVQLRIVNYILYGNGKPIRGISDTSIQLVRTCLVLNWNQDKKSSSCEEARASFVEIRTNGLIRHFLRINLVKSPISYIGKRNDPSGSGLLSDNGSDCTNINPFSSIYSYSKAKIQQSINQPQGTIHTLLNRNKECQSLIILSAANCSRMGPFKDVKYHSVIKKSIKKDPLIPIRNSLGPLGTSLPIENFYSSYHLITHNQILVTNYLQLDNLKQTFQVIKFKYYLMDENGKIFNPDPCRNIILNPFNLNWYFLHHNYCEETSKIISLGQFICENVCIAKNGPPLKSGQVILVQVDSIVIRSAKPYLATPGATVHGHYGETLYEGDTLVTFIYEKSRSGDITQGLPKVEQVLEVRSVDSISMNLEKRIEGWNKCITRILGIPWGFLIGAELTIAQSRISLVNKIQQVYRSQGVQIHNRHLEIIVRQITSKVLVSEDGMSNVFSPGELIGLLRAERMGRALEEAICYRVVLLGITRASLNTQSFISEASFQETARVLAKAALRGRIDWLKGLKENVVLGGVIPVGTGFKGLVHPSKQHNNIPLETKKKNLFEGEMRDILFHHKKLFDSCLSKNFHDIPEQSFIGFNDS.

Positions 224, 295, 302, and 305 each coordinate Zn(2+).

The protein belongs to the RNA polymerase beta' chain family. RpoC2 subfamily. As to quaternary structure, in plastids the minimal PEP RNA polymerase catalytic core is composed of four subunits: alpha, beta, beta', and beta''. When a (nuclear-encoded) sigma factor is associated with the core the holoenzyme is formed, which can initiate transcription. Zn(2+) serves as cofactor.

The protein localises to the plastid. Its subcellular location is the chloroplast. It catalyses the reaction RNA(n) + a ribonucleoside 5'-triphosphate = RNA(n+1) + diphosphate. DNA-dependent RNA polymerase catalyzes the transcription of DNA into RNA using the four ribonucleoside triphosphates as substrates. In Nicotiana sylvestris (Wood tobacco), this protein is DNA-directed RNA polymerase subunit beta''.